Here is a 451-residue protein sequence, read N- to C-terminus: UPF0210 protein CLL_A1718 (451 aa).

The protein belongs to the UPF0210 family. As to quaternary structure, homodimer.

In Clostridium botulinum (strain Eklund 17B / Type B), this protein is UPF0210 protein CLL_A1718.